The sequence spans 98 residues: NADH-ubiquinone oxidoreductase chain 4L (98 aa).

The next 3 helical transmembrane spans lie at 1–21 (MSMVYINIFLAFILSFMGLLI), 30–50 (LLCLEGMMLSLFIMMTVTILT), and 61–81 (IILLVFAACEAALGLSLLVMI).

It belongs to the complex I subunit 4L family. As to quaternary structure, core subunit of respiratory chain NADH dehydrogenase (Complex I) which is composed of 45 different subunits.

It is found in the mitochondrion inner membrane. It catalyses the reaction a ubiquinone + NADH + 5 H(+)(in) = a ubiquinol + NAD(+) + 4 H(+)(out). Functionally, core subunit of the mitochondrial membrane respiratory chain NADH dehydrogenase (Complex I) which catalyzes electron transfer from NADH through the respiratory chain, using ubiquinone as an electron acceptor. Part of the enzyme membrane arm which is embedded in the lipid bilayer and involved in proton translocation. The protein is NADH-ubiquinone oxidoreductase chain 4L (MT-ND4L) of Martes americana (American marten).